The chain runs to 559 residues: Membrane protein insertase YidC (559 aa).

Residues 7 to 24 (ILWVIFSMSLVLLYDNWQ) form a helical membrane-spanning segment. Composition is skewed to low complexity over residues 45–55 (APAASGAAAQG) and 63–82 (QPAT…QAAA). Residues 45–82 (APAASGAAAQGDVPKANVQPATGTSAAPAAGAAPQAAA) form a disordered region. Helical transmembrane passes span 338–358 (LELV…FWLL), 364–384 (FLGN…LVFF), 434–454 (LGGC…YWVL), 472–492 (LSVP…MFVQ), and 507–527 (VMMI…AGLV).

It belongs to the OXA1/ALB3/YidC family. Type 1 subfamily. As to quaternary structure, interacts with the Sec translocase complex via SecD. Specifically interacts with transmembrane segments of nascent integral membrane proteins during membrane integration.

Its subcellular location is the cell inner membrane. In terms of biological role, required for the insertion and/or proper folding and/or complex formation of integral membrane proteins into the membrane. Involved in integration of membrane proteins that insert both dependently and independently of the Sec translocase complex, as well as at least some lipoproteins. Aids folding of multispanning membrane proteins. This chain is Membrane protein insertase YidC, found in Cupriavidus taiwanensis (strain DSM 17343 / BCRC 17206 / CCUG 44338 / CIP 107171 / LMG 19424 / R1) (Ralstonia taiwanensis (strain LMG 19424)).